We begin with the raw amino-acid sequence, 351 residues long: dTDP-glucose 4,6-dehydratase (351 aa).

NAD(+)-binding positions include 12–13 (FI), 32–35 (DALT), 58–59 (DI), 80–84 (FAAES), and Thr-99. Ser-84 is a binding site for substrate. Thr-133 serves as a coordination point for substrate. The active-site Proton donor is the Asp-134. Residues Glu-135 and Tyr-158 each act as proton acceptor in the active site. Residue 158 to 162 (YSASK) participates in NAD(+) binding. A substrate-binding site is contributed by Asn-187. Asn-188 lines the NAD(+) pocket. Substrate contacts are provided by residues 197 to 198 (KL), 213 to 215 (PVY), Arg-222, Asn-257, and 289 to 293 (DRPGH).

This sequence belongs to the NAD(P)-dependent epimerase/dehydratase family. dTDP-glucose dehydratase subfamily. As to quaternary structure, homodimer. It depends on NAD(+) as a cofactor.

The catalysed reaction is dTDP-alpha-D-glucose = dTDP-4-dehydro-6-deoxy-alpha-D-glucose + H2O. It functions in the pathway carbohydrate biosynthesis; dTDP-L-rhamnose biosynthesis. The protein operates within bacterial outer membrane biogenesis; LPS O-antigen biosynthesis. Functionally, catalyzes the dehydration of dTDP-D-glucose to form dTDP-6-deoxy-D-xylo-4-hexulose via a three-step process involving oxidation, dehydration and reduction. In Xanthomonas campestris pv. campestris (strain B100), this protein is dTDP-glucose 4,6-dehydratase (rfbB).